A 1377-amino-acid polypeptide reads, in one-letter code: Dicer-like protein 2 (1377 aa).

In terms of domain architecture, Helicase ATP-binding spans 23 to 203; it reads MFEASLQENI…LSMIESNMNA (181 aa). Residue 36–43 participates in ATP binding; it reads MDTGSGKT. The DEAH box motif lies at 144 to 147; it reads DEAH. One can recognise a Helicase C-terminal domain in the interval 367-544; sequence KLEALISFLS…ALALETMAEV (178 aa). In terms of domain architecture, Dicer dsRNA-binding fold spans 563-657; that stretch reads AVARLHHFCS…LPLTRKPELR (95 aa). RNase III domains lie at 916 to 1056 and 1090 to 1274; these read ATRL…MDGG and NDSL…VDSR. Positions 1129, 1260, and 1263 each coordinate Mg(2+).

It belongs to the helicase family. Dicer subfamily. Mg(2+) serves as cofactor. Mn(2+) is required as a cofactor.

Functionally, dicer-like endonuclease involved in cleaving double-stranded RNA in the RNA interference (RNAi) pathway. Produces 21 to 25 bp dsRNAs (siRNAs) which target the selective destruction of homologous RNAs leading to sequence-specific suppression of gene expression, called post-transcriptional gene silencing (PTGS). Part of a broad host defense response against viral infection and transposons. The sequence is that of Dicer-like protein 2 (dcl2) from Aspergillus terreus (strain NIH 2624 / FGSC A1156).